The chain runs to 138 residues: U1 small nuclear ribonucleoprotein C (138 aa).

Residues 4–36 (FYCDYCDTYLTHDSPSVRKTHCSGRKHKENVRD) form a Matrin-type zinc finger. Residue Y8 is modified to Phosphotyrosine. The residue at position 17 (S17) is a Phosphoserine. K52 bears the N6-acetyllysine mark. The interval 62-99 (IPPNLFSAPPLGGPMIPPPHPSMMGPPPPGMMPVGPPP) is disordered. Residues 72–99 (LGGPMIPPPHPSMMGPPPPGMMPVGPPP) are compositionally biased toward pro residues.

It belongs to the U1 small nuclear ribonucleoprotein C family. As to quaternary structure, component of the U1 snRNP. The U1 snRNP is composed of the U1 snRNA and the 7 core Sm proteins SNRPB, SNRPD1, SNRPD2, SNRPD3, SNRPE, SNRPF and SNRPG that assemble in a heptameric protein ring on the Sm site of the small nuclear RNA to form the core snRNP, and at least 3 U1 snRNP-specific proteins SNRNP70/U1-70K, SNRPA/U1-A and SNRPC/U1-C. SNRPC/U1-C interacts with U1 snRNA and the 5' splice-site region of the pre-mRNA. Interacts (via N-terminus) with TIA1 (via C-terminus); thereby promoting spliceosomal U1 snRNP recruitment to 5' splice sites.

It is found in the nucleus. Component of the spliceosomal U1 snRNP, which is essential for recognition of the pre-mRNA 5' splice-site and the subsequent assembly of the spliceosome. SNRPC/U1-C is directly involved in initial 5' splice-site recognition for both constitutive and regulated alternative splicing. The interaction with the 5' splice-site seems to precede base-pairing between the pre-mRNA and the U1 snRNA. Stimulates commitment or early (E) complex formation by stabilizing the base pairing of the 5' end of the U1 snRNA and the 5' splice-site region. This chain is U1 small nuclear ribonucleoprotein C, found in Monodelphis domestica (Gray short-tailed opossum).